A 200-amino-acid chain; its full sequence is V-type proton ATPase subunit E (200 aa).

The protein belongs to the V-ATPase E subunit family.

In terms of biological role, produces ATP from ADP in the presence of a proton gradient across the membrane. In Thermoanaerobacter pseudethanolicus (strain ATCC 33223 / 39E) (Clostridium thermohydrosulfuricum), this protein is V-type proton ATPase subunit E.